The primary structure comprises 604 residues: UvrABC system protein C (604 aa).

The 79-residue stretch at 12–90 (TAPGVYLMRD…IKQHQPRYNL (79 aa)) folds into the GIY-YIG domain. The region spanning 200–235 (KDLVSGFRQRMKEAAEGLHYEEAARWRDLLKAIDTT) is the UVR domain.

Belongs to the UvrC family. Interacts with UvrB in an incision complex.

The protein localises to the cytoplasm. In terms of biological role, the UvrABC repair system catalyzes the recognition and processing of DNA lesions. UvrC both incises the 5' and 3' sides of the lesion. The N-terminal half is responsible for the 3' incision and the C-terminal half is responsible for the 5' incision. The chain is UvrABC system protein C from Trichlorobacter lovleyi (strain ATCC BAA-1151 / DSM 17278 / SZ) (Geobacter lovleyi).